A 548-amino-acid chain; its full sequence is Probable malate:quinone oxidoreductase (548 aa).

The protein belongs to the MQO family. FAD is required as a cofactor.

The catalysed reaction is (S)-malate + a quinone = a quinol + oxaloacetate. The protein operates within carbohydrate metabolism; tricarboxylic acid cycle; oxaloacetate from (S)-malate (quinone route): step 1/1. The protein is Probable malate:quinone oxidoreductase of Escherichia coli O127:H6 (strain E2348/69 / EPEC).